The sequence spans 223 residues: Neurotrophic factor BDNF precursor form (223 aa).

Residues 1–5 (SCMKA) form the signal peptide. The propeptide occupies 6-114 (APMKEVSIRG…AANMSMRVRR (109 aa)). A glycan (N-linked (GlcNAc...) asparagine) is linked at N107. Intrachain disulfides connect C127/C194 and C172/C223.

Belongs to the NGF-beta family.

It localises to the secreted. Promotes the survival of neuronal populations that are all located either in the central nervous system or directly connected to it. The sequence is that of Neurotrophic factor BDNF precursor form (BDNF) from Candoia carinata (Papuan tree boa).